A 346-amino-acid polypeptide reads, in one-letter code: Tetraacyldisaccharide 4'-kinase (346 aa).

T54–T61 lines the ATP pocket.

This sequence belongs to the LpxK family.

It catalyses the reaction a lipid A disaccharide + ATP = a lipid IVA + ADP + H(+). It functions in the pathway glycolipid biosynthesis; lipid IV(A) biosynthesis; lipid IV(A) from (3R)-3-hydroxytetradecanoyl-[acyl-carrier-protein] and UDP-N-acetyl-alpha-D-glucosamine: step 6/6. Transfers the gamma-phosphate of ATP to the 4'-position of a tetraacyldisaccharide 1-phosphate intermediate (termed DS-1-P) to form tetraacyldisaccharide 1,4'-bis-phosphate (lipid IVA). This chain is Tetraacyldisaccharide 4'-kinase, found in Sinorhizobium medicae (strain WSM419) (Ensifer medicae).